Reading from the N-terminus, the 262-residue chain is MATKILALLALLALLVSATNAFIIPQCSLAPSAIIPQFLPPVTSMGFEHPAVQAYRLQLVLAASALQQPIAQLQQQSLAHLTLQTIATQQQQHFLPSLSHLAVVNPVAYLQQQLLASNPLALANVATYQQQQQLQQFMPALSQLAMVNPAVYLQLLSSSPLAVGNAPTYLQQQLLQQIVPALTHQLAMANPATYLQQLLPFNQLAVSNSAAYLQQRQQLLNPLAVANPLVATFLQQQQLLPYNQFSLMNPALQQPIVGGAIF.

The N-terminal stretch at 1 to 21 (MATKILALLALLALLVSATNA) is a signal peptide.

This sequence belongs to the zein family.

The protein resides in the endoplasmic reticulum membrane. Its function is as follows. Zeins are major seed storage proteins. This chain is Protein FLOURY 2, found in Zea mays (Maize).